The primary structure comprises 327 residues: Undecaprenyl-phosphate 4-deoxy-4-formamido-L-arabinose transferase (327 aa).

Residues methionine 1 to leucine 235 are Cytoplasmic-facing. Residues leucine 236–valine 256 form a helical membrane-spanning segment. The Periplasmic portion of the chain corresponds to leucine 257 to glycine 269. A helical membrane pass occupies residues valine 270–leucine 290. The Cytoplasmic portion of the chain corresponds to leucine 291 to glutamine 327.

Belongs to the glycosyltransferase 2 family.

It localises to the cell inner membrane. It carries out the reaction UDP-4-deoxy-4-formamido-beta-L-arabinose + di-trans,octa-cis-undecaprenyl phosphate = 4-deoxy-4-formamido-alpha-L-arabinopyranosyl di-trans,octa-cis-undecaprenyl phosphate + UDP. Its pathway is glycolipid biosynthesis; 4-amino-4-deoxy-alpha-L-arabinose undecaprenyl phosphate biosynthesis; 4-amino-4-deoxy-alpha-L-arabinose undecaprenyl phosphate from UDP-4-deoxy-4-formamido-beta-L-arabinose and undecaprenyl phosphate: step 1/2. It participates in bacterial outer membrane biogenesis; lipopolysaccharide biosynthesis. In terms of biological role, catalyzes the transfer of 4-deoxy-4-formamido-L-arabinose from UDP to undecaprenyl phosphate. The modified arabinose is attached to lipid A and is required for resistance to polymyxin and cationic antimicrobial peptides. The chain is Undecaprenyl-phosphate 4-deoxy-4-formamido-L-arabinose transferase from Salmonella agona (strain SL483).